The chain runs to 437 residues: Phosphomethylpyrimidine synthase (437 aa).

Substrate is bound by residues N69, M98, Y127, H163, 185 to 187 (SRG), 226 to 229 (DACR), and E265. Position 269 (H269) interacts with Zn(2+). Y292 is a binding site for substrate. H333 lines the Zn(2+) pocket. [4Fe-4S] cluster contacts are provided by C409, C412, and C416.

This sequence belongs to the ThiC family. [4Fe-4S] cluster is required as a cofactor.

It catalyses the reaction 5-amino-1-(5-phospho-beta-D-ribosyl)imidazole + S-adenosyl-L-methionine = 4-amino-2-methyl-5-(phosphooxymethyl)pyrimidine + CO + 5'-deoxyadenosine + formate + L-methionine + 3 H(+). It functions in the pathway cofactor biosynthesis; thiamine diphosphate biosynthesis. In terms of biological role, catalyzes the synthesis of the hydroxymethylpyrimidine phosphate (HMP-P) moiety of thiamine from aminoimidazole ribotide (AIR) in a radical S-adenosyl-L-methionine (SAM)-dependent reaction. The chain is Phosphomethylpyrimidine synthase from Clostridium botulinum (strain Okra / Type B1).